Consider the following 147-residue polypeptide: Large ribosomal subunit protein bL9 (147 aa).

Belongs to the bacterial ribosomal protein bL9 family.

Functionally, binds to the 23S rRNA. In Campylobacter jejuni subsp. doylei (strain ATCC BAA-1458 / RM4099 / 269.97), this protein is Large ribosomal subunit protein bL9.